The following is a 482-amino-acid chain: Glutamate--tRNA ligase 2 (482 aa).

Positions 8-18 (PSPTGQLHIGG) match the 'HIGH' region motif. Positions 249–253 (KLSKR) match the 'KMSKS' region motif. Position 252 (K252) interacts with ATP.

The protein belongs to the class-I aminoacyl-tRNA synthetase family. Glutamate--tRNA ligase type 1 subfamily. Monomer.

Its subcellular location is the cytoplasm. It carries out the reaction tRNA(Glu) + L-glutamate + ATP = L-glutamyl-tRNA(Glu) + AMP + diphosphate. Its function is as follows. Catalyzes the attachment of glutamate to tRNA(Glu) in a two-step reaction: glutamate is first activated by ATP to form Glu-AMP and then transferred to the acceptor end of tRNA(Glu). The polypeptide is Glutamate--tRNA ligase 2 (Caldicellulosiruptor saccharolyticus (strain ATCC 43494 / DSM 8903 / Tp8T 6331)).